A 244-amino-acid polypeptide reads, in one-letter code: tRNA (guanine-N(7)-)-methyltransferase (244 aa).

The disordered stretch occupies residues 1–20; the sequence is MTNPFDSAGSKAPPKPFTVS. S-adenosyl-L-methionine-binding residues include Glu75, Glu100, Asp127, and Asp150. Asp150 is a catalytic residue. Lys154 contributes to the substrate binding site. The segment at 156 to 161 is interaction with RNA; sequence RHNKRR. Substrate-binding positions include Asp186 and 223–226; that span reads THFE.

The protein belongs to the class I-like SAM-binding methyltransferase superfamily. TrmB family.

It catalyses the reaction guanosine(46) in tRNA + S-adenosyl-L-methionine = N(7)-methylguanosine(46) in tRNA + S-adenosyl-L-homocysteine. It functions in the pathway tRNA modification; N(7)-methylguanine-tRNA biosynthesis. In terms of biological role, catalyzes the formation of N(7)-methylguanine at position 46 (m7G46) in tRNA. This chain is tRNA (guanine-N(7)-)-methyltransferase, found in Stenotrophomonas maltophilia (strain K279a).